The primary structure comprises 435 residues: Tryptophan synthase beta chain (435 aa).

N6-(pyridoxal phosphate)lysine is present on Lys-92.

Belongs to the TrpB family. Tetramer of two alpha and two beta chains. Pyridoxal 5'-phosphate serves as cofactor.

It carries out the reaction (1S,2R)-1-C-(indol-3-yl)glycerol 3-phosphate + L-serine = D-glyceraldehyde 3-phosphate + L-tryptophan + H2O. The protein operates within amino-acid biosynthesis; L-tryptophan biosynthesis; L-tryptophan from chorismate: step 5/5. In terms of biological role, the beta subunit is responsible for the synthesis of L-tryptophan from indole and L-serine. The sequence is that of Tryptophan synthase beta chain from Albidiferax ferrireducens (strain ATCC BAA-621 / DSM 15236 / T118) (Rhodoferax ferrireducens).